Consider the following 78-residue polypeptide: MSRVCELTGAKANNGMAVSHSHIRTKKLQQVNLQKRRLWWEEGKKWVNIKISTKALKSIQKVGLDKFAKSNGVDLQKF.

Belongs to the bacterial ribosomal protein bL28 family.

The protein is Large ribosomal subunit protein bL28 of Prochlorococcus marinus (strain MIT 9215).